The sequence spans 57 residues: DNA-directed RNA polymerase subunit Rpo6 (57 aa).

The protein belongs to the archaeal Rpo6/eukaryotic RPB6 RNA polymerase subunit family. In terms of assembly, part of the RNA polymerase complex.

Its subcellular location is the cytoplasm. It is found in the chromosome. It carries out the reaction RNA(n) + a ribonucleoside 5'-triphosphate = RNA(n+1) + diphosphate. Its function is as follows. DNA-dependent RNA polymerase (RNAP) catalyzes the transcription of DNA into RNA using the four ribonucleoside triphosphates as substrates. The chain is DNA-directed RNA polymerase subunit Rpo6 from Thermococcus kodakarensis (strain ATCC BAA-918 / JCM 12380 / KOD1) (Pyrococcus kodakaraensis (strain KOD1)).